Here is a 200-residue protein sequence, read N- to C-terminus: ATP-dependent Clp protease proteolytic subunit (200 aa).

The Nucleophile role is filled by serine 98. Residue histidine 123 is part of the active site.

The protein belongs to the peptidase S14 family. Fourteen ClpP subunits assemble into 2 heptameric rings which stack back to back to give a disk-like structure with a central cavity, resembling the structure of eukaryotic proteasomes.

The protein resides in the cytoplasm. The enzyme catalyses Hydrolysis of proteins to small peptides in the presence of ATP and magnesium. alpha-casein is the usual test substrate. In the absence of ATP, only oligopeptides shorter than five residues are hydrolyzed (such as succinyl-Leu-Tyr-|-NHMec, and Leu-Tyr-Leu-|-Tyr-Trp, in which cleavage of the -Tyr-|-Leu- and -Tyr-|-Trp bonds also occurs).. Its function is as follows. Cleaves peptides in various proteins in a process that requires ATP hydrolysis. Has a chymotrypsin-like activity. Plays a major role in the degradation of misfolded proteins. The sequence is that of ATP-dependent Clp protease proteolytic subunit from Ehrlichia canis (strain Jake).